The chain runs to 1475 residues: Amylopullulanase (1475 aa).

A signal peptide spans 1–31; the sequence is MFKRRALGFLLAFLLVFTAVFGSMPMEFAKA. Ca(2+) contacts are provided by aspartate 245, asparagine 247, aspartate 285, aspartate 340, asparagine 398, aspartate 400, asparagine 403, aspartate 404, glycine 449, and aspartate 451. Substrate contacts are provided by histidine 524 and arginine 627. The Nucleophile role is filled by aspartate 629. The Proton donor role is filled by glutamate 658. Substrate contacts are provided by residues 734–735, aspartate 794, and arginine 798; that span reads HD. 2 consecutive Fibronectin type-III domains span residues 928–1019 and 1164–1257; these read APQP…PAFP and TPTA…TPDI. The CBM20 domain maps to 1255-1362; it reads PDIIPIKVTF…VNDTVQRWRD (108 aa).

This sequence belongs to the glycosyl hydrolase 13 family. It depends on Ca(2+) as a cofactor.

The enzyme catalyses Endohydrolysis of (1-&gt;4)-alpha-D-glucosidic linkages in polysaccharides containing three or more (1-&gt;4)-alpha-linked D-glucose units.. It catalyses the reaction Hydrolysis of (1-&gt;6)-alpha-D-glucosidic linkages in pullulan, amylopectin and glycogen, and in the alpha- and beta-limit dextrins of amylopectin and glycogen.. In Thermoanaerobacter thermohydrosulfuricus (Clostridium thermohydrosulfuricum), this protein is Amylopullulanase (apu).